We begin with the raw amino-acid sequence, 626 residues long: Basic helix-loop-helix ARNT-like protein 1 (626 aa).

Positions 1–58 (MADQRMDISSTISDFMSPGPTDLLSSSLGTSGVDCNRKRKGSATDYQESMDTDKDDPH) are disordered. Ser-17 is subject to Phosphoserine; by GSK3-beta. The segment covering 17–32 (SPGPTDLLSSSLGTSG) has biased composition (low complexity). Thr-21 carries the post-translational modification Phosphothreonine; by GSK3-beta. The short motif at 36 to 41 (NRKRKG) is the Nuclear localization signal element. The bHLH domain occupies 72–125 (NAREAHSQIEKRRRDKMNSFIDELASLVPTCNAMSRKLDKLTVLRMAVQHMKTL). Position 78 is a phosphoserine (Ser-78). Ser-90 bears the Phosphoserine; by CK2 mark. Positions 142 to 152 (LSDDELKHLIL) match the Nuclear export signal 1 motif. In terms of domain architecture, PAS 1 spans 143–215 (SDDELKHLIL…EQLSSSDTAP (73 aa)). A Glycyl lysine isopeptide (Lys-Gly) (interchain with G-Cter in SUMO2 and SUMO3) cross-link involves residue Lys-252. A Glycyl lysine isopeptide (Lys-Gly) (interchain with G-Cter in SUMO); alternate cross-link involves residue Lys-259. Residue Lys-259 forms a Glycyl lysine isopeptide (Lys-Gly) (interchain with G-Cter in SUMO2); alternate linkage. Residues 326–396 (PQPVNGEIRV…ECHRQVLQTR (71 aa)) form the PAS 2 domain. The Nuclear export signal 2 motif lies at 361–369 (LAYLPQELL). Positions 401-444 (TNCYKFKIKDGSFITLRSRWFSFMNPWTKEVEYIVSTNTVVLAN) constitute a PAC domain. Disordered stretches follow at residues 459-492 (SPHS…RAGA) and 511-595 (GSSP…SPSN). An interaction with CIART region spans residues 508–588 (RIRGSSPSSC…IGIDMIDNDQ (81 aa)). The segment covering 511–521 (GSSPSSCGSSP) has biased composition (low complexity). Residue Lys-538 is modified to N6-acetyllysine.

Component of the circadian clock oscillator which includes the CRY1/2 proteins, CLOCK or NPAS2, BMAL1 or BMAL2, CSNK1D and/or CSNK1E, TIMELESS and the PER1/2/3 proteins. Forms a heterodimer with CLOCK. The CLOCK-BMAL1 heterodimer is required for E-box-dependent transactivation, for CLOCK nuclear translocation and degradation, and, for phosphorylation of both CLOCK and BMAL1. Part of a nuclear complex which also includes RACK1 and PRKCA; RACK1 and PRKCA are recruited to the complex in a circadian manner. Interacts with NPAS2. Interacts with EZH2. Interacts with SUMO3. Interacts with SIRT1. Interacts with AHR. Interacts with ID1, ID2 and ID3. Interacts with DDX4. Interacts with OGT. Interacts with EED and SUZ12. Interacts with MTA1. Interacts with CIART. Interacts with HSP90. Interacts with KAT2B and EP300. Interacts with BHLHE40/DEC1 and BHLHE41/DEC2. Interacts with RELB and the interaction is enhanced in the presence of CLOCK. Interacts with PER1, PER2, CRY1 and CRY2 and this interaction requires a translocation to the nucleus. Interaction of the CLOCK-BMAL1 heterodimer with PER or CRY inhibits transcription activation. Interaction of the CLOCK-BMAL1 with CRY1 is independent of DNA but with PER2 is off DNA. The CLOCK-BMAL1 heterodimer interacts with GSK3B. Interacts with KDM5A. Interacts with KMT2A; in a circadian manner. Interacts with UBE3A. Interacts with PRKCG. Interacts with MAGEL2. Interacts with NCOA2. Interacts with THRAP3. The CLOCK-BMAL1 heterodimer interacts with PASD1. Interacts with PASD1. Interacts with USP9X. Interacts with PIWIL2 (via PIWI domain). Interacts with HDAC3. Interacts with HNF4A. Ubiquitinated, leading to its proteasomal degradation. Deubiquitinated by USP9X. In terms of processing, O-glycosylated; contains O-GlcNAc. O-glycosylation by OGT prevents protein degradation by inhibiting ubiquitination. It also stabilizes the CLOCK-BMAL1 heterodimer thereby increasing CLOCK-BMAL1-mediated transcription of genes in the negative loop of the circadian clock such as PER1/2/3 and CRY1/2. Post-translationally, acetylated on Lys-538 by CLOCK during the repression phase of the circadian cycle. Acetylation facilitates recruitment of CRY1 protein and initiates the repression phase of the circadian cycle. Acetylated at Lys-538 by KAT5 during the activation phase of the cycle, leading to recruitment of the positive transcription elongation factor b (P-TEFb) and BRD4, followed by productive elongation of circadian transcripts. Deacetylated by SIRT1, which may result in decreased protein stability. Phosphorylated upon dimerization with CLOCK. Phosphorylation enhances the transcriptional activity, alters the subcellular localization and decreases the stability of the CLOCK-BMAL1 heterodimer by promoting its degradation. Phosphorylation shows circadian variations in the liver with a peak between CT10 to CT14. Phosphorylation at Ser-90 by CK2 is essential for its nuclear localization, its interaction with CLOCK and controls CLOCK nuclear entry. Dephosphorylation at Ser-78 is important for dimerization with CLOCK and transcriptional activity. In terms of processing, sumoylated on Lys-259 upon dimerization with CLOCK. Predominantly conjugated to poly-SUMO2/3 rather than SUMO1 and the level of these conjugates undergo rhythmic variation, peaking at CT9-CT12. Sumoylation localizes it exclusively to the PML body and promotes its ubiquitination in the PML body, ubiquitin-dependent proteasomal degradation and the transcriptional activity of the CLOCK-BMAL1 heterodimer. Post-translationally, undergoes lysosome-mediated degradation in a time-dependent manner in the liver.

The protein localises to the nucleus. It is found in the cytoplasm. The protein resides in the PML body. Its function is as follows. Transcriptional activator which forms a core component of the circadian clock. The circadian clock, an internal time-keeping system, regulates various physiological processes through the generation of approximately 24 hour circadian rhythms in gene expression, which are translated into rhythms in metabolism and behavior. It is derived from the Latin roots 'circa' (about) and 'diem' (day) and acts as an important regulator of a wide array of physiological functions including metabolism, sleep, body temperature, blood pressure, endocrine, immune, cardiovascular, and renal function. Consists of two major components: the central clock, residing in the suprachiasmatic nucleus (SCN) of the brain, and the peripheral clocks that are present in nearly every tissue and organ system. Both the central and peripheral clocks can be reset by environmental cues, also known as Zeitgebers (German for 'timegivers'). The predominant Zeitgeber for the central clock is light, which is sensed by retina and signals directly to the SCN. The central clock entrains the peripheral clocks through neuronal and hormonal signals, body temperature and feeding-related cues, aligning all clocks with the external light/dark cycle. Circadian rhythms allow an organism to achieve temporal homeostasis with its environment at the molecular level by regulating gene expression to create a peak of protein expression once every 24 hours to control when a particular physiological process is most active with respect to the solar day. Transcription and translation of core clock components (CLOCK, NPAS2, BMAL1, BMAL2, PER1, PER2, PER3, CRY1 and CRY2) plays a critical role in rhythm generation, whereas delays imposed by post-translational modifications (PTMs) are important for determining the period (tau) of the rhythms (tau refers to the period of a rhythm and is the length, in time, of one complete cycle). A diurnal rhythm is synchronized with the day/night cycle, while the ultradian and infradian rhythms have a period shorter and longer than 24 hours, respectively. Disruptions in the circadian rhythms contribute to the pathology of cardiovascular diseases, cancer, metabolic syndromes and aging. A transcription/translation feedback loop (TTFL) forms the core of the molecular circadian clock mechanism. Transcription factors, CLOCK or NPAS2 and BMAL1 or BMAL2, form the positive limb of the feedback loop, act in the form of a heterodimer and activate the transcription of core clock genes and clock-controlled genes (involved in key metabolic processes), harboring E-box elements (5'-CACGTG-3') within their promoters. The core clock genes: PER1/2/3 and CRY1/2 which are transcriptional repressors form the negative limb of the feedback loop and interact with the CLOCK|NPAS2-BMAL1|BMAL2 heterodimer inhibiting its activity and thereby negatively regulating their own expression. This heterodimer also activates nuclear receptors NR1D1/2 and RORA/B/G, which form a second feedback loop and which activate and repress BMAL1 transcription, respectively. BMAL1 positively regulates myogenesis and negatively regulates adipogenesis via the transcriptional control of the genes of the canonical Wnt signaling pathway. Plays a role in normal pancreatic beta-cell function; regulates glucose-stimulated insulin secretion via the regulation of antioxidant genes NFE2L2/NRF2 and its targets SESN2, PRDX3, CCLC and CCLM. Negatively regulates the mTORC1 signaling pathway; regulates the expression of MTOR and DEPTOR. Controls diurnal oscillations of Ly6C inflammatory monocytes; rhythmic recruitment of the PRC2 complex imparts diurnal variation to chemokine expression that is necessary to sustain Ly6C monocyte rhythms. Regulates the expression of HSD3B2, STAR, PTGS2, CYP11A1, CYP19A1 and LHCGR in the ovary and also the genes involved in hair growth. Plays an important role in adult hippocampal neurogenesis by regulating the timely entry of neural stem/progenitor cells (NSPCs) into the cell cycle and the number of cell divisions that take place prior to cell-cycle exit. Regulates the circadian expression of CIART and KLF11. The CLOCK-BMAL1 heterodimer regulates the circadian expression of SERPINE1/PAI1, VWF, B3, CCRN4L/NOC, NAMPT, DBP, MYOD1, PPARGC1A, PPARGC1B, SIRT1, GYS2, F7, NGFR, GNRHR, BHLHE40/DEC1, ATF4, MTA1, KLF10 and also genes implicated in glucose and lipid metabolism. Promotes rhythmic chromatin opening, regulating the DNA accessibility of other transcription factors. The NPAS2-BMAL1 heterodimer positively regulates the expression of MAOA, F7 and LDHA and modulates the circadian rhythm of daytime contrast sensitivity by regulating the rhythmic expression of adenylate cyclase type 1 (ADCY1) in the retina. The preferred binding motif for the CLOCK-BMAL1 heterodimer is 5'-CACGTGA-3', which contains a flanking adenine nucleotide at the 3-prime end of the canonical 6-nucleotide E-box sequence. CLOCK specifically binds to the half-site 5'-CAC-3', while BMAL1 binds to the half-site 5'-GTGA-3'. The CLOCK-BMAL1 heterodimer also recognizes the non-canonical E-box motifs 5'-AACGTGA-3' and 5'-CATGTGA-3'. Essential for the rhythmic interaction of CLOCK with ASS1 and plays a critical role in positively regulating CLOCK-mediated acetylation of ASS1. Plays a role in protecting against lethal sepsis by limiting the expression of immune checkpoint protein CD274 in macrophages in a PKM2-dependent manner. Regulates the diurnal rhythms of skeletal muscle metabolism via transcriptional activation of genes promoting triglyceride synthesis (DGAT2) and metabolic efficiency (COQ10B). This chain is Basic helix-loop-helix ARNT-like protein 1 (BMAL1), found in Mesocricetus auratus (Golden hamster).